The sequence spans 1205 residues: Chromosome partition protein Smc (1205 aa).

Residue 32–39 (PNGSGKSN) coordinates ATP. 2 coiled-coil regions span residues 169–288 (KHRK…SIQH) and 330–499 (EELE…GLQR). In terms of domain architecture, SMC hinge spans 514 to 628 (GLFGSIAQLV…VNDLTEAMGL (115 aa)). Coiled-coil stretches lie at residues 661–771 (LEVT…AQET), 802–836 (AVRT…RAQQ), and 979–1033 (DRVT…KDLL).

This sequence belongs to the SMC family. Homodimer.

It localises to the cytoplasm. In terms of biological role, required for chromosome condensation and partitioning. This is Chromosome partition protein Smc from Mycobacterium tuberculosis (strain ATCC 25618 / H37Rv).